A 438-amino-acid chain; its full sequence is Protein kinase PINOID (438 aa).

The segment at 1 to 24 is disordered; that stretch reads MLRESDGEMSLGTTNSPISSGTES. The segment covering 11 to 24 has biased composition (polar residues); the sequence is LGTTNSPISSGTES. The region spanning 75-394 is the Protein kinase domain; sequence FRLMRRIGAG…AAEVKVHPFF (320 aa). ATP-binding positions include 81–89 and Lys109; that span reads IGAGDIGTV. Asp205 functions as the Proton acceptor in the catalytic mechanism. One can recognise an AGC-kinase C-terminal domain in the interval 395–438; sequence KGLNFALIRTLTPPEIPSSVVKKPMKSATFSGRSSNKPAAFDYF.

The protein belongs to the protein kinase superfamily. Ser/Thr protein kinase family. Interacts with PDK1, CML12 and PBP1. Component of a complex made of PINs (e.g. PIN1 and PIN2), MAB4/MELs (e.g. NPY1/MAB4 and NPY5/MEL1) and AGC kinases (e.g. D6PK and PID) at the plasma membrane. Binds directly to PIN2, NPY1/MAB4 and NPY5/MEL1. Autophosphorylated. Phosphorylated by PDK1. Expressed in root hair cells, shoot xylem parenchyma cells and endodermis around the vasculature. Expressed in anther primordia, vasculature of the growing flower stalk, young pedicels and bracts and developing sepals, but not in petals. In pistils, transiently expressed in the vasculature of the style and the septum, and in the integuments and funiculus of the developing ovule.

It is found in the cytoplasm. The protein resides in the cytosol. It localises to the cell membrane. It catalyses the reaction L-seryl-[protein] + ATP = O-phospho-L-seryl-[protein] + ADP + H(+). It carries out the reaction L-threonyl-[protein] + ATP = O-phospho-L-threonyl-[protein] + ADP + H(+). With respect to regulation, activated by magnesium and PDK1. Inhibited by staurosporine. Repressed by calcium. In terms of biological role, serine/threonine-protein kinase involved in the regulation of auxin signaling. Acts as a positive regulator of cellular auxin efflux and regulates organ development by enhancing polar auxin transport. Phosphorylates conserved serine residues in the PIN auxin efflux carriers. Phosphorylation of PIN proteins is required and sufficient for apical-basal PIN polarity that enables directional intercellular auxin fluxes, which mediate differential growth, tissue patterning and organogenesis. Phosphorylates PIN proteins (e.g. PIN1 and PIN2), especially when NPY proteins (e.g. NPY1/MAB4 and NPY5/MEL1) are recruited at the plasma membrane; this enhances the polarized localizations (apical or basal) of PINs in the cell by limiting their lateral diffusion-based escape. Acts in association with PIN1 to control the establishment of bilateral symmetry and promotion of cotyledon outgrowth. Regulates root gravitropism through modulation of PIN2-dependent basipetal auxin transport. Required for polarization of PIN3-dependent auxin transport for hypocotyl gravitropic response. The protein kinase activity of PID is essential for its auxin efflux regulatory function. PID kinase and PP2A phosphatase activities antagonistically regulate phosphorylation of PIN proteins, affecting PIN sorting. This chain is Protein kinase PINOID, found in Arabidopsis thaliana (Mouse-ear cress).